We begin with the raw amino-acid sequence, 1035 residues long: NACHT, LRR and PYD domains-containing protein 3 (1035 aa).

Residues 1-93 (MKMMSVRCKL…WEKAKKDQPE (93 aa)) form the Pyrin domain. Phosphoserine is present on Ser-5. A disulfide bond links Cys-8 and Cys-106. Tyr-13 carries the post-translational modification Phosphotyrosine. The S-palmitoyl cysteine moiety is linked to residue Cys-128. The interval 129-132 (KKKK) is required for binding to phosphatidylinositol 4-phosphate (PtdIns4P). Phosphotyrosine occurs at positions 134 and 138. An FISNA domain is found at 138–208 (YRRHVRSRFY…SSLKLELLFE (71 aa)). At Ser-159 the chain carries Phosphoserine. Tyr-166 is subject to Phosphotyrosine. An ATP-binding site is contributed by Thr-167. Position 199 is a phosphoserine (Ser-199). One can recognise an NACHT domain in the interval 218-534 (HTVVFQGAAG…EFFAAMYYLL (317 aa)). Residue 224-231 (GAAGIGKT) coordinates ATP. Phosphoserine is present on residues Ser-263 and Ser-293. Lys-322 participates in a covalent cross-link: Glycyl lysine isopeptide (Lys-Gly) (interchain with G-Cter in ubiquitin). Ser-332 is subject to Phosphoserine. The KFERQ-like motif 1 motif lies at 353–357 (LEKLQ). Lys-428 participates in a covalent cross-link: Glycyl lysine isopeptide (Lys-Gly) (interchain with G-Cter in ubiquitin). ATP is bound at residue His-520. Residues 603–607 (QVRLE) carry the KFERQ-like motif 2 motif. A Glycyl lysine isopeptide (Lys-Gly) (interchain with G-Cter in ubiquitin) cross-link involves residue Lys-689. Ser-727 and Ser-734 each carry phosphoserine. 5 LRR repeats span residues 741-761 (SLTE…RVLC), 770-791 (NIQR…NISS), 798-818 (KLVE…RLLC), 827-848 (NLQK…DLAL), and 855-875 (SLTR…QVLC). The KFERQ-like motif 3 signature appears at 797–801 (QKLVE). Residue Ser-805 is modified to Phosphoserine. S-palmitoyl cysteine attachment occurs at residues Cys-836, Cys-837, and Cys-843. A Phosphotyrosine modification is found at Tyr-860. A Glycyl lysine isopeptide (Lys-Gly) (interchain with G-Cter in ubiquitin) cross-link involves residue Lys-877. LRR repeat units follow at residues 884-905 (NLQK…ALTS), 912-932 (NLTH…KLLC), 941-962 (KLQM…DLST), and 969-990 (SLRK…TLCE). Cys-957 carries the S-palmitoyl cysteine lipid modification. Lys-972 participates in a covalent cross-link: Glycyl lysine isopeptide (Lys-Gly) (interchain with G-Cter in ubiquitin). The KFERQ-like motif 4 motif lies at 990–994 (EVLKQ). At Ser-1034 the chain carries Phosphoserine.

Belongs to the NLRP family. As to quaternary structure, sensor component of NLRP3 inflammasomes; inflammasomes are supramolecular complexes that assemble in the cytosol in response to pathogens and other damage-associated signals and play critical roles in innate immunity and inflammation. The core of NLRP3 inflammasomes consists of a signal sensor component (NLRP3), an adapter (PYCARD/ASC), which recruits an effector pro-inflammatory caspase (CASP1 and, possibly, CASP4 and CASP5). Homodecamer; inactive NLRP3 forms homodecameric double-ring cages that hide pyrin domains within NACHT-LRR rings to avoid premature activation. Interacts (via pyrin domain) with PYCARD/ASC (via pyrin domain); interaction is direct. Interacts (via LRR repeat domain) with NEK7 (via N-terminus); the interaction is required for the formation of the complex NLRP3:PYCARD, oligomerization of PYCARD/ASC and activation of CASP1. Interacts (via LRR repeat domain) with NR4A1/Nur77 (via N-terminus); the interaction is direct, requires activation of NR4A1 by its ligands NBRE-containing dsDNA and lipopolysaccharide, and stimulates the association of NLRP3 with NEK7 for non-canonical NLRP3 inflammasome activation. Interacts with CARD8; leading to inhibit formation of the NLRP3 inflammasome. Interacts with MEFV; this interaction targets NLRP3 to degradation by autophagy, hence preventing excessive IL1B- and IL18-mediated inflammation. Interacts with EIF2AK2/PKR; this interaction requires EIF2AK2 activity, is accompanied by EIF2AK2 autophosphorylation and promotes inflammasome assembly in response to specific stimuli. Interacts with GBP5 (via DAPIN domain); this interaction promotes inflammasome assembly in response to microbial and soluble, but not crystalline, agents. Interacts with PML (isoform PML-1) (via the leucine-rich repeat (LRR) domain); PML-mediated increase in NLRP3 inflammasome activation does not depend upon this interaction. Interacts (via NACHT domain) with DHX33 (via DEAH box); NLRP3 activation in presence of cytosolic dsRNA is mediated by DHX33. Interacts (via NACHT and LRR domains) with ARRB2; this interaction is direct and inducible by polyunsaturated fatty acids (PUFAs). Interacts (via NACHT domain) with DDX3X under both LPS-primed and inflammasome-activating conditions. Interacts with IRF4 (via the LRR domain); this interaction is direct and is required for optimal IRF4 binding to IL4 promoter and efficient IL4 transactivation during differentiation of Th2 helper T-cells. Interacts with MAVS; promoting localization to mitochondria and activation of the NLRP3 inflammasome. Interacts with MARK4; promoting localization of NLRP3 to the microtubule organizing center (MTOC). Interacts with TRIM50; this interaction also promotes NLRP3 oligomerization and subsequent inflammasome activation. Interacts with IRGM; preventing NLRP3 inflammasome assembly and promoting NLRP3 degradation. Interacts (via NACHT and LLR domains) with ABHD8; this interaction is enhanced in the presence of NLRP3 inflammasome inducers, such as ATP, nigericin, silica, or alum. Interaction with ABHD8 leads the recruitment of ZDHHC12, hence facilitating NLRP3 palmitoylation and degradation by the chaperone-mediated autophagy pathway (CMA), therefore attenuating NLRP3 inflammasome activation. In terms of processing, phosphorylation by MAPK8/JNK1 increases inflammasome activation by promoting deubiquitination by BRCC3 and NLRP3 homooligomerization. Phosphorylation at Ser-805 by CSNK1A1 prevents inflammasome activation by preventing NEK7 recruitment. Phosphorylation at Ser-5 in the pyrin domain inhibits homomultimerization of NLRP3 and activation of the NLRP3 inflammasome: dephosphorylation by protein phosphatase 2A (PP2A) promotes assembly of the NLRP3 inflammasome. Phosphorylation at Ser-293 by PKD/PRKD1 promotes NLRP3 inflammasome assembly. Phosphorylation by ERK1/MAPK3 promotes NLRP3 inflammasome assembly. Phosphorylation by BTK (at Tyr-134, Tyr-138 and Tyr-166) in the region that mediates binding to phosphatidylinositol phosphate, promotes relocalization of NLRP3 and assembly of the NLRP3 inflammasome. Phosphorylation at Tyr-860 inhibits NLRP3 inflammasome assembly: dephosphorylation by PTPN22 promotes inflammasome activation. Phosphorylated by LATS1 and LATS2 at Ser-263 following palmitoylation by ZDHHC1, promoting its relocalization to the microtubule organizing center (MTOC), where NLRP3 is activated by NEK7, leading to inflammasome assembly and activation. Ubiquitinated; undergoes both 'Lys-48'- and 'Lys-63'-linked polyubiquitination. Ubiquitination does not lead to degradation, but inhibits inflammasome activation. Deubiquitination is catalyzed by BRCC3 and associated with NLRP3 activation and inflammasome assembly. This process can be induced by the activation of Toll-like receptors (by LPS), through a non-transcriptional pathway dependent on the mitochondrial production of reactive oxygen species, and by ATP. Ubiquitinated by TRIM31 via 'Lys-48'-linked ubiquitination, leading to its degradation by the proteasome. Ubiquitinated at Lys-689 by the SCF(FBXL2) complex, leading to its degradation by the proteasome. Ubiquitinated by TRIM35 via 'lys-48' and 'Lys-63'-linked ubiquitination leading to inhibition of NLRP3 inflammasome activation. Undergoes 'Lys-27'-linked polyubiquitination by MARCHF5, leading to NLRP3-NEK7 complex formation and NLRP3 oligomerization. Post-translationally, the disulfide bond in the pyrin domain might play a role in reactive oxygen species-mediated activation. In terms of processing, palmitoylation by ZDHHC12 promotes NLRP3 degradation by the chaperone-mediated autophagy pathway (CMA) and therefore limits NLRP3 inflammasome activation. Interaction with ZDHHC12, and hence NLRP3 palmitoylation, is greatly enhanced by ABHD8. Following palmitoylation, HSPA8/HSC70 recognizes and binds the KFERQ-like motifs on NLRP3 and promotes NLRP3 recruitment to lysosomes, where it is degraded via the chaperone-mediated autophagy pathway in a LAMP2-dependent process. Palmitoylation at Cys-836 and Cys-837 by ZDHHC5 enhances its binding to NEK7 leading to inflammasome assembly and activation. Palmitoylation at Cys-128 and Cys-957 by ZDHHC1 facilitates phosphorylation at Ser-263 by LATS1 and LATS2, promoting its relocalization to the microtubule organizing center (MTOC), where NLRP3 is activated by NEK7, leading to inflammasome assembly and activation. Depalmitoylated by ABHD17A. Degraded via selective autophagy following interaction with IRGM. IRGM promotes NLRP3 recruitment to autophagosome membranes, promoting its SQSTM1/p62-dependent autophagy-dependent degradation.

The protein localises to the cytoplasm. It localises to the cytosol. The protein resides in the inflammasome. Its subcellular location is the cytoskeleton. It is found in the microtubule organizing center. The protein localises to the golgi apparatus membrane. It localises to the endoplasmic reticulum. The protein resides in the mitochondrion. Its subcellular location is the secreted. It is found in the nucleus. The enzyme catalyses ATP + H2O = ADP + phosphate + H(+). With respect to regulation, under resting conditions, NLRP3 binds ADP and is autoinhibited. Inactive NLRP3 forms homodecameric double-ring cages that hide pyrin domains within NACHT-LRR rings to avoid premature activation. NLRP3 activation stimuli include extracellular ATP, nigericin, reactive oxygen species, crystals of monosodium urate or cholesterol, amyloid-beta fibers, environmental or industrial particles and nanoparticles, such as asbestos, silica, aluminum salts, cytosolic dsRNA, etc. Almost all stimuli trigger intracellular K(+) efflux. These stimuli lead to membrane perturbations that induce activation of NLRP3. Upon activation, NLRP3 is transported to microtubule organizing center (MTOC), where it is unlocked by NEK7, leading to its relocalization to dispersed trans-Golgi network (dTGN) vesicle membranes and recruitment of PYCARD/ASC for the formation of an active inflammasome complex. NEK7-activated NLRP3 forms a disk-shaped inflammasome. NLRP3 and PYCARD/ASC interact via their respective pyrin domains; interaction initiates speck formation (nucleation) which greatly enhances further addition of soluble PYCARD/ASC molecules to the speck in a prion-like polymerization process. Clustered PYCARD/ASC nucleates the formation of CASP1 filaments through the interaction of their respective CARD domains, acting as a platform for CASP1 polymerization and activation. Active CASP1 then processes IL1B and IL18 precursors, leading to the release of mature cytokines in the extracellular milieu and inflammatory response. NLRP3 inflammasome assembly is inhibited by IRGM, which impedes NLRP3 oligomerization. NLRP3 inflammasome is inhibited by cyclic AMP (cAMP), which directly binds NLRP3; inhibition is relieved by calcium-sensing receptor CASR, which inhibits production of cAMP. Specifically inhibited by sulfonylurea MCC950 (also named CP-456,773, CRID3), a potent and specific small-molecule inhibitor of the NLRP3 inflammasome that acts by preventing ATP hydrolysis. Sensor component of the NLRP3 inflammasome, which mediates inflammasome activation in response to defects in membrane integrity, leading to secretion of inflammatory cytokines IL1B and IL18 and pyroptosis. In response to pathogens and other damage-associated signals that affect the integrity of membranes, initiates the formation of the inflammasome polymeric complex composed of NLRP3, CASP1 and PYCARD/ASC. Recruitment of pro-caspase-1 (proCASP1) to the NLRP3 inflammasome promotes caspase-1 (CASP1) activation, which subsequently cleaves and activates inflammatory cytokines IL1B and IL18 and gasdermin-D (GSDMD), promoting cytokine secretion and pyroptosis. Activation of NLRP3 inflammasome is also required for HMGB1 secretion; stimulating inflammatory responses. Under resting conditions, ADP-bound NLRP3 is autoinhibited. NLRP3 activation stimuli include extracellular ATP, nigericin, reactive oxygen species, crystals of monosodium urate or cholesterol, amyloid-beta fibers, environmental or industrial particles and nanoparticles, such as asbestos, silica, aluminum salts, cytosolic dsRNA, etc. Almost all stimuli trigger intracellular K(+) efflux. These stimuli lead to membrane perturbation and activation of NLRP3. Upon activation, NLRP3 is transported to microtubule organizing center (MTOC), where it is unlocked by NEK7, leading to its relocalization to dispersed trans-Golgi network (dTGN) vesicle membranes and formation of an active inflammasome complex. Associates with dTGN vesicle membranes by binding to phosphatidylinositol 4-phosphate (PtdIns4P). Shows ATPase activity. In terms of biological role, independently of inflammasome activation, regulates the differentiation of T helper 2 (Th2) cells and has a role in Th2 cell-dependent asthma and tumor growth. During Th2 differentiation, required for optimal IRF4 binding to IL4 promoter and for IRF4-dependent IL4 transcription. Binds to the consensus DNA sequence 5'-GRRGGNRGAG-3'. May also participate in the transcription of IL5, IL13, GATA3, CCR3, CCR4 and MAF. The sequence is that of NACHT, LRR and PYD domains-containing protein 3 from Rattus norvegicus (Rat).